A 481-amino-acid polypeptide reads, in one-letter code: tRNA-2-methylthio-N(6)-dimethylallyladenosine synthase (481 aa).

In terms of domain architecture, MTTase N-terminal spans 24-140 (RKLFIESYGC…LPNLINEVEE (117 aa)). The [4Fe-4S] cluster site is built by Cys33, Cys69, Cys103, Cys178, Cys182, and Cys185. The 247-residue stretch at 164-410 (QSNGVSAFVS…VDLQQKHSKQ (247 aa)) folds into the Radical SAM core domain. Positions 413-476 (NSVIGTTVEV…SATLIGEPIG (64 aa)) constitute a TRAM domain.

It belongs to the methylthiotransferase family. MiaB subfamily. In terms of assembly, monomer. It depends on [4Fe-4S] cluster as a cofactor.

The protein resides in the cytoplasm. It catalyses the reaction N(6)-dimethylallyladenosine(37) in tRNA + (sulfur carrier)-SH + AH2 + 2 S-adenosyl-L-methionine = 2-methylsulfanyl-N(6)-dimethylallyladenosine(37) in tRNA + (sulfur carrier)-H + 5'-deoxyadenosine + L-methionine + A + S-adenosyl-L-homocysteine + 2 H(+). In terms of biological role, catalyzes the methylthiolation of N6-(dimethylallyl)adenosine (i(6)A), leading to the formation of 2-methylthio-N6-(dimethylallyl)adenosine (ms(2)i(6)A) at position 37 in tRNAs that read codons beginning with uridine. The protein is tRNA-2-methylthio-N(6)-dimethylallyladenosine synthase of Christiangramia forsetii (strain DSM 17595 / CGMCC 1.15422 / KT0803) (Gramella forsetii).